The following is an 88-amino-acid chain: uncharacterized protein (88 aa).

An N-terminal signal peptide occupies residues 1–22 (MLKASILFITISLTLMLENSYG). 3 cysteine pairs are disulfide-bonded: cysteine 59–cysteine 73, cysteine 66–cysteine 77, and cysteine 72–cysteine 82.

Its subcellular location is the secreted. This is an uncharacterized protein from Schistosoma japonicum (Blood fluke).